The sequence spans 197 residues: Signal peptidase complex catalytic subunit SEC11 (197 aa).

The Cytoplasmic portion of the chain corresponds to 1-14 (MLSSLAPYMANPRQ). Residues 15-33 (TLTQVLNFALVLSTAFMLW) traverse the membrane as a helical; Signal-anchor for type II membrane protein segment. Over 34–197 (KGLSVVTNST…MGLMVVLQRE (164 aa)) the chain is Lumenal. A glycan (N-linked (GlcNAc...) asparagine) is linked at asparagine 41. Residues serine 53 and histidine 92 each act as charge relay system in the active site. Residues 102 to 115 (PGREDKKSVKKGGE) show a composition bias toward basic and acidic residues. A disordered region spans residues 102 to 134 (PGREDKKSVKKGGEEGEETSSTPSQKLLTKGDN). The active-site Charge relay system is the aspartate 139. The tract at residues 183–194 (VLLGFMGLMVVL) is C-terminal short (CTS) helix.

Belongs to the peptidase S26B family. Component of the signal peptidase complex (SPC) composed of a catalytic subunit SEC11 and three accessory subunits SPC1, SPC2 and SPC3. The complex induces a local thinning of the ER membrane which is used to measure the length of the signal peptide (SP) h-region of protein substrates. This ensures the selectivity of the complex towards h-regions shorter than 18-20 amino acids. SPC associates with the translocon complex.

The protein resides in the endoplasmic reticulum membrane. It carries out the reaction Cleavage of hydrophobic, N-terminal signal or leader sequences from secreted and periplasmic proteins.. Its function is as follows. Catalytic component of the signal peptidase complex (SPC) which catalyzes the cleavage of N-terminal signal sequences from nascent proteins as they are translocated into the lumen of the endoplasmic reticulum. Specifically cleaves N-terminal signal peptides that contain a hydrophobic alpha-helix (h-region) shorter than 18-20 amino acids. The sequence is that of Signal peptidase complex catalytic subunit SEC11 (SEC11) from Paracoccidioides lutzii (strain ATCC MYA-826 / Pb01) (Paracoccidioides brasiliensis).